Consider the following 206-residue polypeptide: Small ribosomal subunit protein uS4 (206 aa).

An S4 RNA-binding domain is found at 96–158 (SRLDNVVYRM…AKKQLRIQNA (63 aa)).

Belongs to the universal ribosomal protein uS4 family. In terms of assembly, part of the 30S ribosomal subunit. Contacts protein S5. The interaction surface between S4 and S5 is involved in control of translational fidelity.

Functionally, one of the primary rRNA binding proteins, it binds directly to 16S rRNA where it nucleates assembly of the body of the 30S subunit. With S5 and S12 plays an important role in translational accuracy. The chain is Small ribosomal subunit protein uS4 from Francisella tularensis subsp. mediasiatica (strain FSC147).